The primary structure comprises 481 residues: Glutamine synthetase (481 aa).

The GS beta-grasp domain maps to 22-106; that stretch reads NEVEFVDFRF…VFCDVYDVYK (85 aa). One can recognise a GS catalytic domain in the interval 114 to 481; sequence PRSIAKKALK…PFEFITTYSC (368 aa). Mg(2+) is bound by residues E139, E141, E223, and E230. Residues 274-275 and G275 contribute to the L-glutamate site; that span reads NG. H279 contributes to the Mg(2+) binding site. Residues 281–283 and S283 each bind ATP; that span reads HVS. The L-glutamate site is built by R331, E337, and R349. ATP contacts are provided by R349 and R354. Position 367 (E367) interacts with Mg(2+). R369 contacts L-glutamate.

Belongs to the glutamine synthetase family. As to quaternary structure, oligomer of 12 subunits arranged in the form of two hexameric ring. The cofactor is Mg(2+).

Its subcellular location is the cytoplasm. It catalyses the reaction L-glutamate + NH4(+) + ATP = L-glutamine + ADP + phosphate + H(+). The activity of this enzyme could be controlled by adenylation under conditions of abundant glutamine. Catalyzes the ATP-dependent biosynthesis of glutamine from glutamate and ammonia. The sequence is that of Glutamine synthetase from Helicobacter pylori (strain J99 / ATCC 700824) (Campylobacter pylori J99).